Reading from the N-terminus, the 500-residue chain is Probable transcription factor FPSE_09189 (500 aa).

Disordered regions lie at residues 161–197 and 457–500; these read MVRH…PSLA and IRTG…TQLE. Residues 459 to 474 are compositionally biased toward basic and acidic residues; it reads TGHEDSSRDGGRENKA. Residues 475 to 484 show a composition bias toward polar residues; sequence MNRNRSTGNS.

The protein localises to the nucleus. In terms of biological role, the two putative transcription factors FPSE_09188 and FPSE_09189 could be responsible for orchestrating expression of the W493 A and B biosynthesis cluster genes. W493 A and B consist of six amino acid residues D-allo-thr, L-Ala, D-Ala, L-Gln, D-Tyr, and L-Val/L-Ile linked to a 3-hydroxy-4-methyltetradecanoic acid polyketide chain. In Fusarium pseudograminearum (strain CS3096) (Wheat and barley crown-rot fungus), this protein is Probable transcription factor FPSE_09189.